The sequence spans 117 residues: Conotoxin vil14.3 (117 aa).

The first 22 residues, 1 to 22 (MGFRVLVLVVMATTSALPFTFS), serve as a signal peptide directing secretion. Positions 23 to 90 (EEPGRSPFRP…FAELSVGQRR (68 aa)) are excised as a propeptide. Positions 53 to 79 (RADGQPPDMRQPEMRRPEMRRPEVRQP) are disordered. Over residues 62-79 (RQPEMRRPEMRRPEVRQP) the composition is skewed to basic and acidic residues. Intrachain disulfides connect Cys-96/Cys-116 and Cys-100/Cys-112.

It belongs to the conotoxin R superfamily. In terms of tissue distribution, expressed by the venom duct.

It localises to the secreted. The chain is Conotoxin vil14.3 from Conus villepinii (Villepin's cone).